The sequence spans 883 residues: Protein SEY1 homolog (883 aa).

Topologically, residues 1–795 are cytoplasmic; it reads MQMDRKTQII…ETGGKMSLKN (795 aa). In terms of domain architecture, GB1/RHD3-type G spans 33-279; it reads GFNYNVVAIL…IPSDGFAHYC (247 aa). 43–50 serves as a coordination point for GTP; that stretch reads GSQSSGKS. Residues 673 to 693 are a coiled coil; that stretch reads LDEIMDVLKSKLDEISDNLSS. The chain crosses the membrane as a helical span at residues 796-816; it reads VPLFFWVILLILGWNELLFFI. Topologically, residues 817–819 are lumenal; sequence RFF. The helical transmembrane segment at 820-840 threads the bilayer; that stretch reads FRLNIILPLFLAAAVILSTLF. Topologically, residues 841 to 883 are cytoplasmic; sequence FNGNMEVLSTINKVVFFLAKSSFGFYRQLQTMGEKVAQVPTAD.

It belongs to the TRAFAC class dynamin-like GTPase superfamily. GB1/RHD3 GTPase family. RHD3 subfamily.

It localises to the endoplasmic reticulum membrane. Its function is as follows. Probable GTP-binding protein involved in generating and maintaining the structure of the tubular endoplasmic reticulum network. In Plasmodium knowlesi (strain H), this protein is Protein SEY1 homolog.